The sequence spans 664 residues: Methionine--tRNA ligase (664 aa).

The 'HIGH' region motif lies at 13-23; sequence PYTNGPCHLGH. The Zn(2+) site is built by Cys-144, Cys-147, Cys-156, and Cys-160. The 'KMSKS' region motif lies at 327–331; that stretch reads KFSKS. Lys-330 contributes to the ATP binding site. In terms of domain architecture, tRNA-binding spans 566-664; sequence EFAKVEMKTG…TPVPSGTKIR (99 aa).

It belongs to the class-I aminoacyl-tRNA synthetase family. MetG type 1 subfamily. As to quaternary structure, homodimer. Zn(2+) is required as a cofactor.

The protein resides in the cytoplasm. It carries out the reaction tRNA(Met) + L-methionine + ATP = L-methionyl-tRNA(Met) + AMP + diphosphate. Its function is as follows. Is required not only for elongation of protein synthesis but also for the initiation of all mRNA translation through initiator tRNA(fMet) aminoacylation. In Methanospirillum hungatei JF-1 (strain ATCC 27890 / DSM 864 / NBRC 100397 / JF-1), this protein is Methionine--tRNA ligase.